We begin with the raw amino-acid sequence, 265 residues long: MTTPTPLAPDGDDPLVIAGTPLRSRLLIGTAGYPTQAIMAEAVRASGAEIATVSIRRVSLRGHGSDTVSLLAGHRFLPNTAGCETARDAVMTAELAREALGTAWIKVEVIGDRETLYPDVAETLEATRQLVDAGFVVLPYCNDDPVVCARLADLGAAAVMPMGSLIGSGMGVANPANLELICRRSPVPVIVDAGIGTASDAVIAMELGAAAVLLNTAVAKADDPVRMARAMRHAVEAGRLAHGAGRIPRRARAEPSSPQLGLVGS.

The active-site Schiff-base intermediate with DXP is the Lys106. 1-deoxy-D-xylulose 5-phosphate contacts are provided by residues Gly167, 193-194 (AG), and 215-216 (NT). The interval 245-265 (GRIPRRARAEPSSPQLGLVGS) is disordered.

It belongs to the ThiG family. In terms of assembly, homotetramer. Forms heterodimers with either ThiH or ThiS.

It is found in the cytoplasm. It carries out the reaction [ThiS sulfur-carrier protein]-C-terminal-Gly-aminoethanethioate + 2-iminoacetate + 1-deoxy-D-xylulose 5-phosphate = [ThiS sulfur-carrier protein]-C-terminal Gly-Gly + 2-[(2R,5Z)-2-carboxy-4-methylthiazol-5(2H)-ylidene]ethyl phosphate + 2 H2O + H(+). Its pathway is cofactor biosynthesis; thiamine diphosphate biosynthesis. Functionally, catalyzes the rearrangement of 1-deoxy-D-xylulose 5-phosphate (DXP) to produce the thiazole phosphate moiety of thiamine. Sulfur is provided by the thiocarboxylate moiety of the carrier protein ThiS. In vitro, sulfur can be provided by H(2)S. This Methylobacterium sp. (strain 4-46) protein is Thiazole synthase.